We begin with the raw amino-acid sequence, 61 residues long: Small ribosomal subunit protein uS14B (61 aa).

Zn(2+) contacts are provided by cysteine 24, cysteine 27, cysteine 40, and cysteine 43.

This sequence belongs to the universal ribosomal protein uS14 family. Zinc-binding uS14 subfamily. Part of the 30S ribosomal subunit. Contacts proteins S3 and S10. The cofactor is Zn(2+).

In terms of biological role, binds 16S rRNA, required for the assembly of 30S particles and may also be responsible for determining the conformation of the 16S rRNA at the A site. The sequence is that of Small ribosomal subunit protein uS14B from Lactiplantibacillus plantarum (strain ATCC BAA-793 / NCIMB 8826 / WCFS1) (Lactobacillus plantarum).